The sequence spans 333 residues: MSLFLSNVILHQLRKNDNDELVVNYRAESLRNDTSTENLVAELHRVFNAKAGKGFGCFKSDSEFQLWLQEMRRGTLPFYEFSQQSAQRLKNELAKYPFADEGILVMAEYQSLATDYLFIGLLPLNQSLKVTEGLDISATDYLDINKMDIVARIDLSSYETDKESKRYLSYIKGRVGRKVADFFLDFLQADIGLDTKQQNQVLMQAVEDFCADAKFEKEEVISYKKQVYEYCNDQIKAGDEVRVQELSGELPPSNEGVNFFDFTREQGYQLEESFPADRSTVRKLTKYVGAGGGLNLSFDSLLLGERVFYDPETDTLTIKGTPPNLRDQLTRLR.

This sequence belongs to the YejK family.

The protein localises to the cytoplasm. It localises to the nucleoid. The chain is Nucleoid-associated protein VC0395_A1624/VC395_2154 from Vibrio cholerae serotype O1 (strain ATCC 39541 / Classical Ogawa 395 / O395).